We begin with the raw amino-acid sequence, 351 residues long: Phosphoribosylformylglycinamidine cyclo-ligase (351 aa).

This sequence belongs to the AIR synthase family.

The protein resides in the cytoplasm. It catalyses the reaction 2-formamido-N(1)-(5-O-phospho-beta-D-ribosyl)acetamidine + ATP = 5-amino-1-(5-phospho-beta-D-ribosyl)imidazole + ADP + phosphate + H(+). Its pathway is purine metabolism; IMP biosynthesis via de novo pathway; 5-amino-1-(5-phospho-D-ribosyl)imidazole from N(2)-formyl-N(1)-(5-phospho-D-ribosyl)glycinamide: step 2/2. In Burkholderia cenocepacia (strain ATCC BAA-245 / DSM 16553 / LMG 16656 / NCTC 13227 / J2315 / CF5610) (Burkholderia cepacia (strain J2315)), this protein is Phosphoribosylformylglycinamidine cyclo-ligase.